The chain runs to 354 residues: Sulfate/thiosulfate import ATP-binding protein CysA (354 aa).

In terms of domain architecture, ABC transporter spans 3-237 (IEVRGLSKRF…PATPFVYGFL (235 aa)). 35-42 (GPSGCGKT) is an ATP binding site.

It belongs to the ABC transporter superfamily. Sulfate/tungstate importer (TC 3.A.1.6) family. The complex is composed of two ATP-binding proteins (CysA), two transmembrane proteins (CysT and CysW) and a solute-binding protein (CysP).

Its subcellular location is the cell inner membrane. It carries out the reaction sulfate(out) + ATP + H2O = sulfate(in) + ADP + phosphate + H(+). It catalyses the reaction thiosulfate(out) + ATP + H2O = thiosulfate(in) + ADP + phosphate + H(+). Functionally, part of the ABC transporter complex CysAWTP involved in sulfate/thiosulfate import. Responsible for energy coupling to the transport system. This chain is Sulfate/thiosulfate import ATP-binding protein CysA, found in Bordetella pertussis (strain Tohama I / ATCC BAA-589 / NCTC 13251).